A 741-amino-acid polypeptide reads, in one-letter code: Cytosolic phospholipase A2 (741 aa).

The region spanning 1-116 (MSNIIVEHQY…KVAQMEHVTL (116 aa)) is the C2 domain. Residues 1–172 (MSNIIVEHQY…IKKLLKMENP (172 aa)) are phospholipid binding. Ca(2+)-binding residues include Asp34, Thr35, Asp37, Asn59, Asp87, Ala88, and Asn89. Residues 132–729 (VCASTDLRFS…SLSEIENKKF (598 aa)) enclose the PLA2c domain. Residue Ser223 is the Nucleophile of the active site. The segment at 406–453 (TSSSTMEEELEQIKPEHIVGDDSADNEEETQRGGTESADAEDERQRHA) is disordered. Basic and acidic residues predominate over residues 416–425 (EQIKPEHIVG). Position 498 is a phosphoserine; by MAPK (Ser498). The active-site Proton acceptor is the Asp540.

Post-translationally, activated by phosphorylation on a serine residue.

The protein resides in the cytoplasm. Its subcellular location is the cytoplasmic vesicle. It carries out the reaction a 1,2-diacyl-sn-glycero-3-phosphocholine + H2O = a 1-acyl-sn-glycero-3-phosphocholine + a fatty acid + H(+). It catalyses the reaction a 1-acyl-sn-glycero-3-phosphocholine + H2O = sn-glycerol 3-phosphocholine + a fatty acid + H(+). Its activity is regulated as follows. Stimulated by agonists such as ATP, EGF, thrombin and bradykinin as well as by cytosolic Ca(2+). In terms of biological role, selectively hydrolyzes arachidonyl phospholipids in the sn-2 position releasing arachidonic acid. Together with its lysophospholipid activity, it is implicated in the initiation of the inflammatory response. The polypeptide is Cytosolic phospholipase A2 (pla2g4a) (Danio rerio (Zebrafish)).